The primary structure comprises 338 residues: MLTLGLESSCDETSCSLVQNGKILANKIASQDIHASYGGVIPELASRAHLQTFPELLTAATQSAGVSLEDIELISVANTPGLIGALSIGVNFAKGLASGLKRPLIGVNHVEAHLYAACMEAPATQFPALGLAISGAHTSLFLMPDATTFLLIGKTRDDAIGETFDKVARFLGLPYPGGQKLEELAREGDADAFAFSPARVSGYDFSFSGLKTAVLYALKGNNSSAKAPFPEVSETQKRNIAASFQKAVFMTIAQKLPDIVKAFSCESLIVGGGVANNSYFRRLLNQICSLPIYFPSSQLCSDNAAMIAGLGERLFCNRTHVSKEVIPCARYQWESACS.

The Fe cation site is built by His109 and His113. Substrate-binding positions include Ala132–Ala136, Asp165, Gly178, and Asn277. Residue Asp302 participates in Fe cation binding.

Belongs to the KAE1 / TsaD family. It depends on Fe(2+) as a cofactor.

The protein resides in the cytoplasm. It carries out the reaction L-threonylcarbamoyladenylate + adenosine(37) in tRNA = N(6)-L-threonylcarbamoyladenosine(37) in tRNA + AMP + H(+). Functionally, required for the formation of a threonylcarbamoyl group on adenosine at position 37 (t(6)A37) in tRNAs that read codons beginning with adenine. Is involved in the transfer of the threonylcarbamoyl moiety of threonylcarbamoyl-AMP (TC-AMP) to the N6 group of A37, together with TsaE and TsaB. TsaD likely plays a direct catalytic role in this reaction. In Chlamydia trachomatis serovar L2b (strain UCH-1/proctitis), this protein is tRNA N6-adenosine threonylcarbamoyltransferase.